A 328-amino-acid polypeptide reads, in one-letter code: DNA-directed RNA polymerase subunit alpha (328 aa).

An alpha N-terminal domain (alpha-NTD) region spans residues 1–231 (MIYQMQMPER…EHVSLFANFS (231 aa)). The alpha C-terminal domain (alpha-CTD) stretch occupies residues 252–328 (MRKLLQTRIE…MDITKYQMKS (77 aa)).

It belongs to the RNA polymerase alpha chain family. Homodimer. The RNAP catalytic core consists of 2 alpha, 1 beta, 1 beta' and 1 omega subunit. When a sigma factor is associated with the core the holoenzyme is formed, which can initiate transcription.

It carries out the reaction RNA(n) + a ribonucleoside 5'-triphosphate = RNA(n+1) + diphosphate. In terms of biological role, DNA-dependent RNA polymerase catalyzes the transcription of DNA into RNA using the four ribonucleoside triphosphates as substrates. In Prosthecochloris aestuarii (strain DSM 271 / SK 413), this protein is DNA-directed RNA polymerase subunit alpha.